Consider the following 245-residue polypeptide: Lactate utilization protein A (245 aa).

The protein belongs to the LutA/YkgE family.

Is involved in L-lactate degradation and allows cells to grow with lactate as the sole carbon source. The protein is Lactate utilization protein A of Macrococcus caseolyticus (strain JCSC5402) (Macrococcoides caseolyticum).